We begin with the raw amino-acid sequence, 153 residues long: Superoxide dismutase [Cu-Zn] (153 aa).

Cu cation is bound by residues His45, His47, and His62. Cys56 and Cys145 are joined by a disulfide. Zn(2+)-binding residues include His62, His70, His79, and Asp82. Residue His119 coordinates Cu cation.

Belongs to the Cu-Zn superoxide dismutase family. As to quaternary structure, homodimer. Requires Cu cation as cofactor. It depends on Zn(2+) as a cofactor.

It is found in the cytoplasm. It carries out the reaction 2 superoxide + 2 H(+) = H2O2 + O2. In terms of biological role, destroys radicals which are normally produced within the cells and which are toxic to biological systems. In Drosophila yakuba (Fruit fly), this protein is Superoxide dismutase [Cu-Zn].